The primary structure comprises 71 residues: SRY-related protein LG27 (71 aa).

The segment at residues 1-68 (VKRPMNAFMV…KHMADYPNYK (68 aa)) is a DNA-binding region (HMG box).

The protein resides in the nucleus. The chain is SRY-related protein LG27 from Eublepharis macularius (Leopard gecko).